Here is a 113-residue protein sequence, read N- to C-terminus: Integration host factor subunit alpha (113 aa).

The segment at 88–113 (ALNGGVSDETEGADDDDDDEEGEGDE) is disordered. Acidic residues predominate over residues 95-113 (DETEGADDDDDDEEGEGDE).

This sequence belongs to the bacterial histone-like protein family. As to quaternary structure, heterodimer of an alpha and a beta chain.

Functionally, this protein is one of the two subunits of integration host factor, a specific DNA-binding protein that functions in genetic recombination as well as in transcriptional and translational control. The chain is Integration host factor subunit alpha from Anaeromyxobacter dehalogenans (strain 2CP-C).